Reading from the N-terminus, the 380-residue chain is Dynactin subunit 2 (380 aa).

The interval 1–32 is disordered; sequence MADPKFQNLPGIAYDQPDVYETPDDPELDTSD. Positions 21–32 are enriched in acidic residues; sequence ETPDDPELDTSD. Ser49, Ser58, and Ser86 each carry phosphoserine. Coiled coils occupy residues 100 to 135 and 353 to 377; these read VQKCQRLQIEMNELLNEVAALQVDRKVADEEKQSYD and ETFAQNLETINSKVAKVEQRVAAIS.

The protein belongs to the dynactin subunit 2 family. In terms of assembly, subunit of dynactin, a multiprotein complex associated with dynein.

The protein resides in the cytoplasm. The protein localises to the cytoskeleton. It is found in the membrane. In terms of biological role, modulates cytoplasmic dynein binding to an organelle, and plays a role in prometaphase chromosome alignment and spindle organization during mitosis. May play a role in synapse formation during brain development. This is Dynactin subunit 2 from Drosophila melanogaster (Fruit fly).